The chain runs to 480 residues: Ammonium transporter 2 member 4 (480 aa).

At 1-27 the chain is on the extracellular side; sequence MELPSNLLPDEASPEWMNKGDNAWQLT. The chain crosses the membrane as a helical span at residues 28–48; it reads AATMVGLQSIPGLVILYGSLV. Residues 49-51 are Cytoplasmic-facing; it reads KKT. A helical transmembrane segment spans residues 52-72; sequence WAINSAFMAFYAFASVLLCWV. Topologically, residues 73-113 are extracellular; that stretch reads SWAYQMSFGEKMVFFLGKPNVALDEKFLLGKAFLGNFPNAT. Residue asparagine 111 is glycosylated (N-linked (GlcNAc...) asparagine). A helical membrane pass occupies residues 114–134; it reads MVFYQGVFAGLTLILIAGALL. Over 135-141 the chain is Cytoplasmic; it reads GRMNIRA. The helical transmembrane segment at 142-162 threads the bilayer; it reads WMLFVPLWVTFSYTVVAFSIW. Topologically, residues 163-175 are extracellular; the sequence is CPDGWLAKRGVID. Residues 176 to 196 form a helical membrane-spanning segment; that stretch reads FAGGYVIHLSAGVAGFTAAYW. Over 197 to 214 the chain is Cytoplasmic; sequence VGPRADKDRETFPAATNN. Residues 215–235 traverse the membrane as a helical segment; that stretch reads MIMVLAGAGLLWMGWSGFNGG. The Extracellular portion of the chain corresponds to 236 to 242; that stretch reads APFVAST. The chain crosses the membrane as a helical span at residues 243 to 263; that stretch reads IASLAILNTHVCTAASITVWV. Residues 264 to 274 lie on the Cytoplasmic side of the membrane; that stretch reads MLDTFYFGKPT. A helical membrane pass occupies residues 275 to 295; the sequence is VFGAVQGMITGLVCITPAAGV. Residues 296–298 lie on the Extracellular side of the membrane; sequence VQG. The chain crosses the membrane as a helical span at residues 299–319; that stretch reads WAAILMGFISGSIPWYTMMVL. Topologically, residues 320 to 334 are cytoplasmic; sequence HNKVNFLKKIDDPMA. The helical transmembrane segment at 335–355 threads the bilayer; that stretch reads VFHTHAIAGALGGILTGFFAV. The Extracellular portion of the chain corresponds to 356 to 394; the sequence is PKLCRLFYMVPDWEKYIGLAYGLQNKGATQAGLKQMVIQ. The helical transmembrane segment at 395–415 threads the bilayer; the sequence is IEAIVFVICYNVLMTSLICLI. The Cytoplasmic segment spans residues 416-480; sequence VRVIVPLRLN…SRSLGELQMV (65 aa).

It belongs to the ammonia transporter channel (TC 1.A.11.2) family.

The protein localises to the cell membrane. In terms of biological role, involved in ammonium transport. May be involved in arbuscular mycorrhizal (AM) symbiosis with AM fungi. The polypeptide is Ammonium transporter 2 member 4 (Medicago truncatula (Barrel medic)).